A 165-amino-acid chain; its full sequence is Nucleotide-binding protein Chy400_2003 (165 aa).

This sequence belongs to the YajQ family.

In terms of biological role, nucleotide-binding protein. The polypeptide is Nucleotide-binding protein Chy400_2003 (Chloroflexus aurantiacus (strain ATCC 29364 / DSM 637 / Y-400-fl)).